Consider the following 354-residue polypeptide: Glycerol-3-phosphate dehydrogenase [NAD(P)+] (354 aa).

NADPH-binding residues include serine 27, phenylalanine 28, arginine 48, and lysine 121. Positions 121 and 149 each coordinate sn-glycerol 3-phosphate. Position 153 (alanine 153) interacts with NADPH. Positions 204, 257, 267, 268, and 269 each coordinate sn-glycerol 3-phosphate. Residue lysine 204 is the Proton acceptor of the active site. Residue arginine 268 coordinates NADPH. 2 residues coordinate NADPH: valine 292 and glutamate 294.

Belongs to the NAD-dependent glycerol-3-phosphate dehydrogenase family.

The protein localises to the cytoplasm. The catalysed reaction is sn-glycerol 3-phosphate + NAD(+) = dihydroxyacetone phosphate + NADH + H(+). The enzyme catalyses sn-glycerol 3-phosphate + NADP(+) = dihydroxyacetone phosphate + NADPH + H(+). Its pathway is membrane lipid metabolism; glycerophospholipid metabolism. Its function is as follows. Catalyzes the reduction of the glycolytic intermediate dihydroxyacetone phosphate (DHAP) to sn-glycerol 3-phosphate (G3P), the key precursor for phospholipid synthesis. This chain is Glycerol-3-phosphate dehydrogenase [NAD(P)+], found in Pseudomonas fluorescens (strain Pf0-1).